The chain runs to 382 residues: Neuropeptide Y receptor type 1 (382 aa).

Over 1–33 (MNSTLFSKVENHSIHYNASENSPLLAFENDDCH) the chain is Extracellular. 3 N-linked (GlcNAc...) asparagine glycosylation sites follow: Asn2, Asn11, and Asn17. A helical transmembrane segment spans residues 34–54 (LPLAVIFTLALAYGAVIILGV). The Cytoplasmic portion of the chain corresponds to 55 to 75 (SGNLALIIIILKQKEMRNVTN). A helical membrane pass occupies residues 76 to 96 (ILIVNLSFSDLLVAVMCLPFT). The Extracellular portion of the chain corresponds to 97-115 (FVYTLMDHWVFGETMCKLN). Cys112 and Cys197 are disulfide-bonded. A helical membrane pass occupies residues 116–136 (PFVQCVSITVSIFSLVLIAVE). The Cytoplasmic portion of the chain corresponds to 137 to 153 (RHQLIINPRGWRPNNRH). The chain crosses the membrane as a helical span at residues 154–174 (AYIGITVIWVLAVASSLPFVI). The Extracellular segment spans residues 175–210 (YQILTDEPFQNVSLAAFKDKYVCFDKFPSDSHRLSY). A helical membrane pass occupies residues 211-231 (TTLLLVLQYFGPLCFIFICYF). Residues 232-259 (KIYIRLKRRNNMMDKIRDSKYRSSETKR) are Cytoplasmic-facing. Residues 260 to 280 (INIMLLSIVVAFAVCWLPLTI) traverse the membrane as a helical segment. Residues 281–298 (FNTVFDWNHQIIATCNHN) are Extracellular-facing. Residues 299-319 (LLFLLCHLTAMISTCVNPIFY) form a helical membrane-spanning segment. The Cytoplasmic segment spans residues 320–382 (GFLNKNFQRD…KISMNDNEKV (63 aa)). The S-palmitoyl cysteine moiety is linked to residue Cys337. Residues Ser367 and Ser375 each carry the phosphoserine modification.

Belongs to the G-protein coupled receptor 1 family. As to expression, the alpha form is highly expressed in the brain, heart, kidney, spleen, skeletal muscle, and lung, whereas the beta receptor mRNA was not detected in these tissues. However, the beta form is expressed in mouse embryonic developmental stage (7 and 11 days), bone marrow cells and several hematopoietic cell lines.

It is found in the cell membrane. In terms of biological role, receptor for neuropeptide Y and peptide YY. The chain is Neuropeptide Y receptor type 1 (Npy1r) from Mus musculus (Mouse).